A 158-amino-acid chain; its full sequence is Large ribosomal subunit protein uL16 (158 aa).

The protein belongs to the universal ribosomal protein uL16 family. As to quaternary structure, part of the 50S ribosomal subunit.

In terms of biological role, binds 23S rRNA and is also seen to make contacts with the A and possibly P site tRNAs. This is Large ribosomal subunit protein uL16 from Synechococcus sp. (strain CC9902).